The primary structure comprises 510 residues: GTPase Der (510 aa).

2 consecutive EngA-type G domains span residues 4-168 (PVVA…AEKM) and 222-395 (IKIA…ACAT). Residues 10-17 (GRPNVGKS), 57-61 (DTGGI), 120-123 (NKTD), 228-235 (GRPNVGKS), 275-279 (DTAGV), and 340-343 (NKWD) contribute to the GTP site. One can recognise a KH-like domain in the interval 396–480 (QKMTTSMLTR…PIRLLFQEGN (85 aa)).

It belongs to the TRAFAC class TrmE-Era-EngA-EngB-Septin-like GTPase superfamily. EngA (Der) GTPase family. Associates with the 50S ribosomal subunit.

GTPase that plays an essential role in the late steps of ribosome biogenesis. The sequence is that of GTPase Der from Pasteurella multocida (strain Pm70).